Consider the following 333-residue polypeptide: MAASTLGSAWGPLRLGVPGLCRRRPPRGLWARARRLSEPVASGRSVAAGSGLGASGTDRYCLELLRKRDYEGYLCSLLLPAESRSSAFALRAFNVELAQIKDSVSEKTIGLMRMQFWKKTVDDIYSDNPPHQPVAIELWKAVRRHNLTKRWLMKIIDEREKNLDDKAYRNIQELENYAENTQSSLLYLTLEILGIKDLHADHAASHIGKAQGIVTCLRATPYHGSRRRVFLPMDICMLHGVSQEDFLRKSQDRNVRDVVYDVASQAHLHLKHARSFHRSIPVKAFPAFLQTVALEDYLKKIQQVDFDLFHPSLQRKNTLLPLSLYIQSWRKRY.

The N-terminal 44 residues, 1–44 (MAASTLGSAWGPLRLGVPGLCRRRPPRGLWARARRLSEPVASGR), are a transit peptide targeting the mitochondrion.

This sequence belongs to the NDUFAF6 family.

The protein resides in the mitochondrion inner membrane. Functionally, involved in the assembly of mitochondrial NADH:ubiquinone oxidoreductase complex (complex I) at early stages. May play a role in the biogenesis of complex I subunit MT-ND1. This chain is NADH dehydrogenase (ubiquinone) complex I, assembly factor 6 (NDUFAF6), found in Bos taurus (Bovine).